Here is a 285-residue protein sequence, read N- to C-terminus: ATP synthase subunit a (285 aa).

6 helical membrane-spanning segments follow: residues 41 to 61 (TWHVDTLAWSIGLGLIFLWIF), 102 to 122 (IAPLALTIFVWVFLMNLMDLI), 164 to 184 (LGVFILMVGFAIKIKGIGGFI), 197 to 217 (VFVQILLIPFNLLLELIALVS), 226 to 246 (LFGNLYAGELIFILIGAIGFM), and 252 to 272 (FVWAVFHILVITLQAFLFMML).

It belongs to the ATPase A chain family. As to quaternary structure, F-type ATPases have 2 components, CF(1) - the catalytic core - and CF(0) - the membrane proton channel. CF(1) has five subunits: alpha(3), beta(3), gamma(1), delta(1), epsilon(1). CF(0) has three main subunits: a(1), b(2) and c(9-12). The alpha and beta chains form an alternating ring which encloses part of the gamma chain. CF(1) is attached to CF(0) by a central stalk formed by the gamma and epsilon chains, while a peripheral stalk is formed by the delta and b chains.

Its subcellular location is the cell inner membrane. Key component of the proton channel; it plays a direct role in the translocation of protons across the membrane. The polypeptide is ATP synthase subunit a (Pseudoalteromonas translucida (strain TAC 125)).